Here is a 464-residue protein sequence, read N- to C-terminus: MATMVPTEFDTIAAISTPPGEGAISIVRLSGEDAVKIANKVFKGKNLEKVPTHTINYGHIVNPKTNEELDEVMVSVMLAPRTFTREDVIEINCHGGIVPTNQILQLLLSNGARLAEPGEFTKRAFLHGRIDLTQAESVMDLIRAKTDRSMKVALNQLDGNLSHLIRNLRQDILDVLAQVEVNIDYPEYDDVETLTTKMLREKAIEVKKSIQQLLTTAKQGKVLREGLATAIVGRPNVGKSSLLNHLLHEDKAIVTDIAGTTRDVIEEYVNVRGVPLKLIDTAGIRETEDKVERIGVERSRKAIEQADLVMLVLNASEELTDEDKELIQATSGKKRIVILNKTDLPQKLNMDEVRELVPEDELITTSVLKKTGVDKLEEKIAELFFGGIENSQSTIMVTNARHIALLNQAEDSLDAVLQGLDSGMPVDLCQIDMTNAWDELGEITGDSYQDELLTQLFSQFCLGK.

3 residues coordinate (6S)-5-formyl-5,6,7,8-tetrahydrofolate: Arg28, Glu90, and Arg129. One can recognise a TrmE-type G domain in the interval Gly226–Phe385. Position 236 (Asn236) interacts with K(+). GTP is bound by residues Asn236–Ser241, Thr255–Thr261, and Asp280–Gly283. Residue Ser240 coordinates Mg(2+). Thr255, Ile257, and Thr260 together coordinate K(+). Thr261 lines the Mg(2+) pocket. Residue Lys464 participates in (6S)-5-formyl-5,6,7,8-tetrahydrofolate binding.

It belongs to the TRAFAC class TrmE-Era-EngA-EngB-Septin-like GTPase superfamily. TrmE GTPase family. As to quaternary structure, homodimer. Heterotetramer of two MnmE and two MnmG subunits. The cofactor is K(+).

The protein localises to the cytoplasm. Its function is as follows. Exhibits a very high intrinsic GTPase hydrolysis rate. Involved in the addition of a carboxymethylaminomethyl (cmnm) group at the wobble position (U34) of certain tRNAs, forming tRNA-cmnm(5)s(2)U34. The chain is tRNA modification GTPase MnmE from Ligilactobacillus salivarius (strain UCC118) (Lactobacillus salivarius).